Consider the following 930-residue polypeptide: Translation initiation factor IF-2 (930 aa).

Residues Phe-50 to Val-67 are compositionally biased toward low complexity. Disordered regions lie at residues Phe-50–Asp-195 and Glu-260–Pro-346. Composition is skewed to basic and acidic residues over residues Ser-68–Pro-90 and Phe-110–Arg-125. Low complexity predominate over residues Lys-129–Arg-141. 2 stretches are compositionally biased toward basic and acidic residues: residues Arg-157–Lys-167 and Val-262–Arg-295. Low complexity predominate over residues Asn-309–Asn-318. Residues Val-337–Pro-346 show a composition bias toward basic and acidic residues. The 168-residue stretch at Glu-432–Glu-599 folds into the tr-type G domain. Positions Gly-441–Thr-448 are G1. Gly-441 to Thr-448 lines the GTP pocket. The G2 stretch occupies residues Gly-466–His-470. Residues Asp-487–Gly-490 are G3. GTP is bound by residues Asp-487 to His-491 and Asn-541 to Asp-544. The interval Asn-541 to Asp-544 is G4. Residues Ser-577 to Lys-579 are G5.

The protein belongs to the TRAFAC class translation factor GTPase superfamily. Classic translation factor GTPase family. IF-2 subfamily.

It localises to the cytoplasm. Functionally, one of the essential components for the initiation of protein synthesis. Protects formylmethionyl-tRNA from spontaneous hydrolysis and promotes its binding to the 30S ribosomal subunits. Also involved in the hydrolysis of GTP during the formation of the 70S ribosomal complex. The sequence is that of Translation initiation factor IF-2 from Streptococcus pneumoniae (strain Hungary19A-6).